A 239-amino-acid polypeptide reads, in one-letter code: Purine nucleoside phosphorylase DeoD-type (239 aa).

Histidine 5 lines the a purine D-ribonucleoside pocket. Residues glycine 21, arginine 25, arginine 44, and 88–91 (RVGS) contribute to the phosphate site. A purine D-ribonucleoside-binding positions include 180–182 (EME) and 204–205 (SD). The active-site Proton donor is the aspartate 205.

The protein belongs to the PNP/UDP phosphorylase family. Homohexamer; trimer of homodimers.

The enzyme catalyses a purine D-ribonucleoside + phosphate = a purine nucleobase + alpha-D-ribose 1-phosphate. It carries out the reaction a purine 2'-deoxy-D-ribonucleoside + phosphate = a purine nucleobase + 2-deoxy-alpha-D-ribose 1-phosphate. Its function is as follows. Catalyzes the reversible phosphorolytic breakdown of the N-glycosidic bond in the beta-(deoxy)ribonucleoside molecules, with the formation of the corresponding free purine bases and pentose-1-phosphate. In Myxococcus xanthus (strain DK1622), this protein is Purine nucleoside phosphorylase DeoD-type.